The chain runs to 1314 residues: Phosphoribosylformylglycinamidine synthase (1314 aa).

ATP is bound by residues G307–D318 and A674. Residues D675, E714, N718, and D880 each contribute to the Mg(2+) site. Residue S882 participates in ATP binding. The Glutamine amidotransferase type-1 domain occupies I1063–G1314. The Nucleophile role is filled by C1156. Catalysis depends on residues H1279 and E1281.

The protein in the N-terminal section; belongs to the FGAMS family. Monomer.

The protein localises to the cytoplasm. It catalyses the reaction N(2)-formyl-N(1)-(5-phospho-beta-D-ribosyl)glycinamide + L-glutamine + ATP + H2O = 2-formamido-N(1)-(5-O-phospho-beta-D-ribosyl)acetamidine + L-glutamate + ADP + phosphate + H(+). It functions in the pathway purine metabolism; IMP biosynthesis via de novo pathway; 5-amino-1-(5-phospho-D-ribosyl)imidazole from N(2)-formyl-N(1)-(5-phospho-D-ribosyl)glycinamide: step 1/2. In terms of biological role, phosphoribosylformylglycinamidine synthase involved in the purines biosynthetic pathway. Catalyzes the ATP-dependent conversion of formylglycinamide ribonucleotide (FGAR) and glutamine to yield formylglycinamidine ribonucleotide (FGAM) and glutamate. The chain is Phosphoribosylformylglycinamidine synthase from Neisseria gonorrhoeae (strain ATCC 700825 / FA 1090).